Reading from the N-terminus, the 172-residue chain is Adenine phosphoribosyltransferase (172 aa).

Belongs to the purine/pyrimidine phosphoribosyltransferase family. In terms of assembly, homodimer.

It is found in the cytoplasm. It catalyses the reaction AMP + diphosphate = 5-phospho-alpha-D-ribose 1-diphosphate + adenine. Its pathway is purine metabolism; AMP biosynthesis via salvage pathway; AMP from adenine: step 1/1. In terms of biological role, catalyzes a salvage reaction resulting in the formation of AMP, that is energically less costly than de novo synthesis. The polypeptide is Adenine phosphoribosyltransferase (Prochlorococcus marinus (strain MIT 9215)).